Reading from the N-terminus, the 246-residue chain is Myogenic factor 5 (246 aa).

The disordered stretch occupies residues 1–38; sequence RVRARIPGLSSPEGEFPEDFEPRELPPFGAPAPTEPAC. Residues 73–124 enclose the bHLH domain; that stretch reads DRRKAATMRERRRLKKVNQAFETLKRCTTANPNQRLPKVEILRNAIRYIESL. The disordered stretch occupies residues 210-246; it reads EEPGLPLRHAGSLSPGASIDSGARTPGSPPPRTYQAL. The segment covering 236–246 has biased composition (pro residues); the sequence is GSPPPRTYQAL.

Efficient DNA binding requires dimerization with another bHLH protein.

It localises to the nucleus. Acts as a transcriptional activator that promotes transcription of muscle-specific target genes and plays a role in muscle differentiation. Induces fibroblasts to differentiate into myoblasts. Probable sequence specific DNA-binding protein. This chain is Myogenic factor 5 (MYF5), found in Coturnix japonica (Japanese quail).